The primary structure comprises 31 residues: MEVNILAFIATALLILVPTAFLLIIYVKTAS.

The helical transmembrane segment at 5–25 (ILAFIATALLILVPTAFLLII) threads the bilayer.

The protein belongs to the PsbM family. As to quaternary structure, PSII is composed of 1 copy each of membrane proteins PsbA, PsbB, PsbC, PsbD, PsbE, PsbF, PsbH, PsbI, PsbJ, PsbK, PsbL, PsbM, PsbT, PsbX, PsbY, PsbZ, Psb30/Ycf12, at least 3 peripheral proteins of the oxygen-evolving complex and a large number of cofactors. It forms dimeric complexes.

It localises to the plastid membrane. Its function is as follows. One of the components of the core complex of photosystem II (PSII). PSII is a light-driven water:plastoquinone oxidoreductase that uses light energy to abstract electrons from H(2)O, generating O(2) and a proton gradient subsequently used for ATP formation. It consists of a core antenna complex that captures photons, and an electron transfer chain that converts photonic excitation into a charge separation. This subunit is found at the monomer-monomer interface. The protein is Photosystem II reaction center protein M of Cuscuta reflexa (Southern Asian dodder).